The chain runs to 116 residues: Host cell factor C1 regulator 1 (116 aa).

The disordered stretch occupies residues 1–22 (MILQQPLERGPPGRDPRATTGV). The segment at 54–57 (DHPY) is interaction with HCFC1. Residues 88 to 97 (IPEALRLLRL) carry the Nuclear export signal motif.

In terms of assembly, interacts with HCFC1.

It is found in the cytoplasm. Its subcellular location is the nucleus. Regulates HCFC1 activity by modulating its subcellular localization. Overexpression of HCFC1R1 leads to accumulation of HCFC1 in the cytoplasm. HCFC1R1-mediated export may provide the pool of cytoplasmic HCFC1 required for import of virion-derived VP16 into the nucleus. This chain is Host cell factor C1 regulator 1 (Hcfc1r1), found in Rattus norvegicus (Rat).